Here is a 1190-residue protein sequence, read N- to C-terminus: Plakophilin-4 (1190 aa).

A disordered region spans residues 1-32 (MPAPEQGSLVEEGQPQTHQEAVSTGPGMEPET). Positions 36 to 63 (TILASVKEQELQFQRLTRELEVERQIVA) form a coiled coil. The interval 73-347 (AESPSIASTS…KRSGMTAVPQ (275 aa)) is disordered. A Phosphoserine modification is found at serine 75. Over residues 77–86 (SIASTSSTEK) the composition is skewed to polar residues. Residue threonine 84 is modified to Phosphothreonine. Residues serine 106, serine 132, serine 136, and serine 139 each carry the phosphoserine modification. Composition is skewed to polar residues over residues 138-156 (GSLGNSRSSTQMNSYSDSG), 163-203 (FHNS…QPSV), and 213-229 (SVPSRAQSPSYVTSTGV). Serine 220, serine 230, and serine 235 each carry phosphoserine. Positions 230–241 (SPSRGSLRTSLG) are enriched in low complexity. Residues 247–266 (PSVTDSRPLNPSAYSSSTLP) show a composition bias toward polar residues. Arginine 253 and arginine 269 each carry omega-N-methylarginine. A phosphoserine mark is found at serine 272, serine 280, serine 313, serine 326, and serine 336. The segment covering 289-323 (SVTSRQTSNPNGPVPQYQTTTRVGSPLTLTDAQTR) has biased composition (polar residues). Residues 324 to 337 (VASPSQGQVGSSSP) show a composition bias toward low complexity. Phosphotyrosine is present on tyrosine 371. Residues serine 391, serine 402, and serine 405 each carry the phosphoserine modification. Threonine 411 carries the post-translational modification Phosphothreonine. A Phosphotyrosine modification is found at tyrosine 414. Phosphoserine is present on residues serine 421, serine 426, and serine 437. Tyrosine 477 carries the post-translational modification Phosphotyrosine. Phosphoserine occurs at positions 509, 511, and 514. 3 ARM repeats span residues 517-556 (KDPREFAWRDPELPEVIHMLQHQFPSVQANAAAYLQHLCF), 559-598 (NKVKMEVYRLGGIKHLVDLLDHRVLEVQKNACGALRNLVF), and 603-643 (DENK…NLSS). The segment covering 772-781 (GKESPSKDSE) has biased composition (basic and acidic residues). Residues 772–809 (GKESPSKDSEPSCWGKKKKKKKRTPQEDQWDGVGPIPG) form a disordered region. Serine 775 is modified (phosphoserine). One copy of the ARM 4 repeat lies at 861 to 900 (AYIRAAVRKEKGLPILVELLRMDNDRVVSSVATALRNMAL). Phosphothreonine is present on residues threonine 1012 and threonine 1016. Serine 1044, serine 1090, serine 1099, and serine 1133 each carry phosphoserine.

It belongs to the beta-catenin family. Interacts (via the C-terminus) with FRMPD2 (via the PDZ 2 domain). Interacts with PDZD2. Interacts with RHOA; the interaction is detected at the midbody. Interacts with ECT2; the interaction is detected at the midbody. Interacts with CCDC85B.

It is found in the cell junction. The protein resides in the desmosome. It localises to the cytoplasm. Its subcellular location is the cytoskeleton. The protein localises to the spindle. It is found in the spindle pole. The protein resides in the midbody. It localises to the cell membrane. Its function is as follows. Plays a role as a regulator of Rho activity during cytokinesis. May play a role in junctional plaques. This Mus musculus (Mouse) protein is Plakophilin-4 (Pkp4).